A 437-amino-acid polypeptide reads, in one-letter code: Palmitoyltransferase PFA4 (437 aa).

The Cytoplasmic segment spans residues 1 to 12; sequence MAGLNDVPFIKG. A helical membrane pass occupies residues 13-33; that stretch reads LAVPSVCALIIFLGYASQFLF. Residues 34-48 lie on the Lumenal side of the membrane; that stretch reads NYSTTLEPGPPTRRE. The helical transmembrane segment at 49–69 threads the bilayer; it reads TIIFNGLLLVLWITYYRTVAT. Over 70–130 the chain is Cytoplasmic; it reads DPGRYIFKDR…RNCVSMTTFP (61 aa). In terms of domain architecture, DHHC spans 87–137; it reads RWCNKCAAPKPPRAHHCRHCARCVPRMDHHCPWTRNCVSMTTFPHFLRFLI. The active-site S-palmitoyl cysteine intermediate is Cys117. A helical transmembrane segment spans residues 131 to 151; it reads HFLRFLIYTNMSLWMLGYFLW. Residues 152–173 lie on the Lumenal side of the membrane; sequence QRFSKIWEHRRLPAYLGPSFYG. The chain crosses the membrane as a helical span at residues 174–194; that stretch reads LICLSLISIVNFVTTVALGIM. Residues 195 to 437 are Cytoplasmic-facing; it reads LINTVKSWVF…KILKKDGLDD (243 aa). Residues 377–419 are disordered; the sequence is LDQGLGWVNSDGDRLRDYGVDEEASEPEGVNDDDDDDDDDDVP. Residues 396–419 are compositionally biased toward acidic residues; the sequence is VDEEASEPEGVNDDDDDDDDDDVP.

The protein belongs to the DHHC palmitoyltransferase family. PFA4 subfamily.

It is found in the endoplasmic reticulum membrane. The enzyme catalyses L-cysteinyl-[protein] + hexadecanoyl-CoA = S-hexadecanoyl-L-cysteinyl-[protein] + CoA. Mediates the reversible addition of palmitate to target proteins, thereby regulating their membrane association and biological function. In Gibberella zeae (strain ATCC MYA-4620 / CBS 123657 / FGSC 9075 / NRRL 31084 / PH-1) (Wheat head blight fungus), this protein is Palmitoyltransferase PFA4.